The primary structure comprises 778 residues: Ribonucleoside-diphosphate reductase large subunit (778 aa).

Residues S177, S192 to C193, G221, N419 to E423, and P613 to S617 each bind substrate. C193 and C439 form a disulfide bridge. N419 serves as the catalytic Proton acceptor. The active-site Cysteine radical intermediate is the C421. Residue E423 is the Proton acceptor of the active site.

Belongs to the ribonucleoside diphosphate reductase large chain family. In terms of assembly, heterotetramer composed of a homodimer of the large subunit (R1) and a homodimer of the small subunit (R2). Larger multisubunit protein complex are also active, composed of (R1)n(R2)n.

It catalyses the reaction a 2'-deoxyribonucleoside 5'-diphosphate + [thioredoxin]-disulfide + H2O = a ribonucleoside 5'-diphosphate + [thioredoxin]-dithiol. Under complex allosteric control mediated by deoxynucleoside triphosphates and ATP binding. The type of nucleotide bound at the specificity site determines substrate preference. It seems probable that ATP makes the enzyme reduce CDP and UDP, dGTP favors ADP reduction and dTTP favors GDP reduction. Its function is as follows. Ribonucleoside-diphosphate reductase holoenzyme provides the precursors necessary for viral DNA synthesis. Allows virus growth in non-dividing cells. Catalyzes the biosynthesis of deoxyribonucleotides from the corresponding ribonucleotides. The sequence is that of Ribonucleoside-diphosphate reductase large subunit from African swine fever virus (isolate Tick/South Africa/Pretoriuskop Pr4/1996) (ASFV).